Reading from the N-terminus, the 311-residue chain is Syndecan-1 (311 aa).

Positions 1–22 are cleaved as a signal peptide; sequence MRRAALWLWLCALALRLQPALP. Residues 23-255 lie on the Extracellular side of the membrane; that stretch reads QIVAVNVPPE…SLLDRKEVLG (233 aa). Disordered stretches follow at residues 29–59 and 152–184; these read VPPEDQDGSGDDSDNFSGSGTGALPDTLSRQ and SHPHGGMQPGLHETSAPTAPGQPDHQPPRVEGG. Positions 32–42 are enriched in acidic residues; sequence EDQDGSGDDSD. Ser37 carries an O-linked (Xyl...) (chondroitin sulfate) serine glycan. N-linked (GlcNAc...) asparagine glycosylation is present at Asn43. O-linked (Xyl...) (heparan sulfate) serine glycosylation is found at Ser45 and Ser47. O-linked (Xyl...) (chondroitin sulfate) serine glycosylation is found at Ser207 and Ser217. The helical transmembrane segment at 256–276 threads the bilayer; sequence GVIAGGLVGLIFAVCLVAFML. Residues 277 to 311 are Cytoplasmic-facing; the sequence is YRMKKKDEGSYSLEEPKQANGGAYQKPTKQEEFYA. Residues 285–311 are disordered; it reads GSYSLEEPKQANGGAYQKPTKQEEFYA. Ser286 carries the post-translational modification Phosphoserine.

It belongs to the syndecan proteoglycan family. Interacts with CDCP1. Interacts (via C-terminus) with TIAM1 (via PDZ domain). Interacts with MDK. Shedding is enhanced by a number of factors such as heparanase, thrombin or EGF. Also by stress and wound healing. PMA-mediated shedding is inhibited by TIMP3.

It localises to the membrane. The protein resides in the secreted. It is found in the extracellular exosome. Cell surface proteoglycan that contains both heparan sulfate and chondroitin sulfate and that links the cytoskeleton to the interstitial matrix. Regulates exosome biogenesis in concert with SDCBP and PDCD6IP. Able to induce its own expression in dental mesenchymal cells and also in the neighboring dental epithelial cells via an MSX1-mediated pathway. This Mus musculus (Mouse) protein is Syndecan-1.